A 314-amino-acid polypeptide reads, in one-letter code: Replication initiation protein (314 aa).

Belongs to the plasmid replication initiation factor family.

In terms of biological role, this protein is probably a specific topoisomerase involved in initiating replication. This protein is specifically required and may be rate-limiting for replication of the plasmid in vivo. This is Replication initiation protein (repC) from Staphylococcus aureus.